A 47-amino-acid polypeptide reads, in one-letter code: Conotoxin Bu10 (47 aa).

The propeptide occupies 1 to 22; sequence DSRGTQLHRALRKATILSVSAR. 3 disulfide bridges follow: cysteine 23/cysteine 37, cysteine 30/cysteine 41, and cysteine 36/cysteine 46. The residue at position 46 (cysteine 46) is a Cysteine amide.

Belongs to the conotoxin O1 superfamily. In terms of tissue distribution, expressed by the venom duct.

It localises to the secreted. This is Conotoxin Bu10 from Conus bullatus (Bubble cone).